The primary structure comprises 443 residues: MVTKAKTARTPTVGFVSLGCPKATVDSERILTQLRAEGYGIVGSYDDADVVVVNTCGFIDAAVQESLEAIGEAIAENGKVIVTGCLGAKGELIREVHPKVLAVSGPHALDEVMEAVHGALPKPHDPFADLIPPGGIKLTPRHYAYLKISEGCNHRCSFCIIPSMRGDLVSRPIGEVMHEAEALVSAGVQELLVVSQDTSAYGVDVKYRPGFWGGRPVKTRMTELARALGSLGAWVRLHYVYPYPSVDDVIPLMADGVILPYLDIPFQHASPRILKLMKRPGAVEKTLDRIHAWRAAVPELTLRSTFIVGFPGETDPEFEELLDFLKHAQLDRVGCFKYSPIEGAVANELPDPVPEELKDERLERFMETQAEISAARLDAKIGRTIEVLVDEEDEVGTLARSHADAPEIDGVVYLEGVFGLKPGTRLTVKVDEADAHDLWATPV.

Positions 11–121 constitute an MTTase N-terminal domain; the sequence is PTVGFVSLGC…VMEAVHGALP (111 aa). The [4Fe-4S] cluster site is built by Cys-20, Cys-56, Cys-85, Cys-152, Cys-156, and Cys-159. The region spanning 138–375 is the Radical SAM core domain; it reads LTPRHYAYLK…METQAEISAA (238 aa). In terms of domain architecture, TRAM spans 378–443; it reads DAKIGRTIEV…DAHDLWATPV (66 aa).

The protein belongs to the methylthiotransferase family. RimO subfamily. Requires [4Fe-4S] cluster as cofactor.

The protein resides in the cytoplasm. The enzyme catalyses L-aspartate(89)-[ribosomal protein uS12]-hydrogen + (sulfur carrier)-SH + AH2 + 2 S-adenosyl-L-methionine = 3-methylsulfanyl-L-aspartate(89)-[ribosomal protein uS12]-hydrogen + (sulfur carrier)-H + 5'-deoxyadenosine + L-methionine + A + S-adenosyl-L-homocysteine + 2 H(+). Functionally, catalyzes the methylthiolation of an aspartic acid residue of ribosomal protein uS12. This chain is Ribosomal protein uS12 methylthiotransferase RimO, found in Thiobacillus denitrificans (strain ATCC 25259 / T1).